The primary structure comprises 150 residues: Large ribosomal subunit protein bL9 (150 aa).

It belongs to the bacterial ribosomal protein bL9 family.

Its function is as follows. Binds to the 23S rRNA. This Latilactobacillus sakei subsp. sakei (strain 23K) (Lactobacillus sakei subsp. sakei) protein is Large ribosomal subunit protein bL9.